Here is a 378-residue protein sequence, read N- to C-terminus: Alpha-(1,3)-fucosyltransferase fut-5 (378 aa).

Topologically, residues 1-7 (MKHNTLR) are cytoplasmic. A helical; Signal-anchor for type II membrane protein transmembrane segment spans residues 8–28 (AVFQFSFFIGICTFIMIAGYS). Residues 29–378 (YQINYNQRMG…CDNSFATRFL (350 aa)) lie on the Lumenal side of the membrane. N-linked (GlcNAc...) asparagine glycans are attached at residues asparagine 44, asparagine 88, asparagine 105, asparagine 143, asparagine 171, and asparagine 307.

The protein belongs to the glycosyltransferase 10 family. The cofactor is Ca(2+). In terms of processing, N-glycosylated.

It localises to the golgi apparatus. Its subcellular location is the golgi stack membrane. The catalysed reaction is a beta-D-galactosyl-(1-&gt;3)-N-acetyl-beta-D-glucosaminyl derivative + GDP-beta-L-fucose = a beta-D-galactosyl-(1-&gt;3)-[alpha-L-fucosyl-(1-&gt;4)]-N-acetyl-beta-D-glucosaminyl derivative + GDP + H(+). It participates in protein modification; protein glycosylation. Inhibited by Cu(2+) and Ni(2+), and to a lesser extent by EDTA, Mn(2+) and Mg(2+). Its function is as follows. Catalyzes the addition of fucose in alpha 1-3 linkage to GalNAc-beta-1-&gt;4-GlcNAc-beta-1-&gt;3-Gal-beta-1-&gt;4-Glc (LDNT)acceptor. Unlike fut-1, does not add fucose to Man-alpha-1-&gt;3-(Man-alpha-1-&gt;6)-Man-beta-1-&gt;4-GlcNAc-beta-1-&gt;4-GlcNAc-beta-1-Asn (M3), Man-alpha-1-&gt;3-(Man-alpha-1-&gt;6)-Man-beta-1-&gt;4-GlcNAc-beta-1-&gt;4-(Fuc-alpha-1-&gt;6)-GlcNAc-beta-1-Asn (M3F6) or GlcNAc-beta-1-&gt;2-Man-alpha-1-&gt;3-(GlcNAc-beta-1-&gt;2-Man-alpha-1-&gt;6)-Man-beta-1-4-GlcNAc-beta-1-&gt;4-(Fuc-alpha-1-&gt;6)-GlcNAc-beta-1-Asn (GnM3F6) acceptors. The protein is Alpha-(1,3)-fucosyltransferase fut-5 of Caenorhabditis elegans.